Here is a 355-residue protein sequence, read N- to C-terminus: 4-hydroxy-3-methylbut-2-en-1-yl diphosphate synthase (flavodoxin) (355 aa).

Residues C266, C269, C301, and E308 each contribute to the [4Fe-4S] cluster site.

This sequence belongs to the IspG family. [4Fe-4S] cluster is required as a cofactor.

It carries out the reaction (2E)-4-hydroxy-3-methylbut-2-enyl diphosphate + oxidized [flavodoxin] + H2O + 2 H(+) = 2-C-methyl-D-erythritol 2,4-cyclic diphosphate + reduced [flavodoxin]. It functions in the pathway isoprenoid biosynthesis; isopentenyl diphosphate biosynthesis via DXP pathway; isopentenyl diphosphate from 1-deoxy-D-xylulose 5-phosphate: step 5/6. Converts 2C-methyl-D-erythritol 2,4-cyclodiphosphate (ME-2,4cPP) into 1-hydroxy-2-methyl-2-(E)-butenyl 4-diphosphate. In Caldanaerobacter subterraneus subsp. tengcongensis (strain DSM 15242 / JCM 11007 / NBRC 100824 / MB4) (Thermoanaerobacter tengcongensis), this protein is 4-hydroxy-3-methylbut-2-en-1-yl diphosphate synthase (flavodoxin).